The primary structure comprises 793 residues: uncharacterized protein (793 aa).

An N-terminal signal peptide occupies residues 1–21 (MLKKTLLAYTIGFAFSPPANA). Cys769 and Cys792 are oxidised to a cystine.

The protein belongs to the fimbrial export usher family.

It localises to the cell outer membrane. Functionally, involved in the export and assembly of a fimbrial subunit across the outer membrane. This is an uncharacterized protein from Escherichia coli (strain K12).